The sequence spans 29 residues: Dermaseptin-H7 (29 aa).

Leucine 29 carries the leucine amide modification.

It belongs to the frog skin active peptide (FSAP) family. Dermaseptin subfamily. As to expression, expressed by the skin glands.

It is found in the secreted. Its function is as follows. Has antibacterial activity against the Gram-negative bacterium E.coli and the Gram-positive bacterium S.aureus. Has antiprotozoal activity against L.amazonensis. Has antifungal activity. Has no hemolytic activity. This chain is Dermaseptin-H7, found in Pithecopus hypochondrialis (Orange-legged leaf frog).